The following is a 142-amino-acid chain: Natriuretic peptides A (142 aa).

The N-terminal stretch at 1–23 (MMLKTVIYTGVLFLICNKVLVRA) is a signal peptide. Positions 24-112 (DPLYSPYSSK…RLRDLLMAPR (89 aa)) are excised as a propeptide. A disordered region spans residues 47–123 (DTLGQDEGND…NRGSSGCFGS (77 aa)). Residues 77–94 (WDRERERQWPASDYKKPQ) are compositionally biased toward basic and acidic residues. Residues Cys120 and Cys136 are joined by a disulfide bond.

Belongs to the natriuretic peptide family. In terms of processing, cleaved upon secretion to produce the functional hormone. In terms of tissue distribution, expressed in heart atrium and to a lower extent in heart ventricle, but not in brain.

The protein localises to the secreted. Hormone playing a key role in cardiovascular homeostasis through regulation of natriuresis, diuresis, and vasodilation. Has a cGMP-stimulating activity. The polypeptide is Natriuretic peptides A (nppa) (Acipenser transmontanus (White sturgeon)).